Consider the following 1434-residue polypeptide: Receptor-type tyrosine-protein phosphatase U (1434 aa).

An N-terminal signal peptide occupies residues 1–17 (MRSARALLLALALRVCA). Topologically, residues 18–748 (LDSETPSAGC…QHSEEMGLIL (731 aa)) are extracellular. In terms of domain architecture, MAM spans 25–187 (AGCTFEEDDD…ILLLNYPCSK (163 aa)). Asn74 carries an N-linked (GlcNAc...) asparagine glycan. The Ig-like C2-type domain occupies 189–274 (PHFSRLGDVE…TQSSRGSGVS (86 aa)). A disulfide bond links Cys209 and Cys263. Fibronectin type-III domains follow at residues 287 to 382 (PIAP…CAEP), 385 to 483 (APKG…TDED), 484 to 590 (VPGG…SAPT), and 597 to 677 (PSPL…TEAK). Residue Asn409 is glycosylated (N-linked (GlcNAc...) asparagine). Asn684 carries an N-linked (GlcNAc...) asparagine glycan. A helical transmembrane segment spans residues 749–769 (GICAGGLVVLIILLGAIIVVI). At 770–1434 (RKGKPVNMTK…LEYLESLETR (665 aa)) the chain is on the cytoplasmic side. Positions 824–839 (RGDQRSSVVNESSSLL) are enriched in polar residues. A disordered region spans residues 824–851 (RGDQRSSVVNESSSLLGGSPRRQCGRKG). 2 Tyrosine-protein phosphatase domains span residues 876-1132 (KTAE…ILEA) and 1164-1427 (LREE…ALEY). Substrate contacts are provided by residues Glu1041, 1073–1079 (CSAGTGR), and Gln1117. The Phosphocysteine intermediate role is filled by Cys1073. The Phosphocysteine intermediate role is filled by Cys1368.

This sequence belongs to the protein-tyrosine phosphatase family. Receptor class 2B subfamily.

Its subcellular location is the cell junction. The protein resides in the cell membrane. It catalyses the reaction O-phospho-L-tyrosyl-[protein] + H2O = L-tyrosyl-[protein] + phosphate. Functionally, tyrosine-protein phosphatase which dephosphorylates CTNNB1. May function in cell proliferation and migration and play a role in the maintenance of epithelial integrity. The sequence is that of Receptor-type tyrosine-protein phosphatase U (PTPRU) from Gallus gallus (Chicken).